A 545-amino-acid polypeptide reads, in one-letter code: Gamma-curcumene synthase (545 aa).

Asp299, Asp303, Asn442, and Glu450 together coordinate Mg(2+). Residues 299–303 (DDTYD) carry the DDXXD motif motif.

Belongs to the terpene synthase family. Mg(2+) serves as cofactor.

It is found in the cytoplasm. The protein resides in the cytosol. The catalysed reaction is (2E,6E)-farnesyl diphosphate = gamma-curcumene + diphosphate. It participates in secondary metabolite biosynthesis; terpenoid biosynthesis. Sesquiterpene synthase involved in gamma-curcumene biosynthesis. This Pogostemon cablin (Patchouli) protein is Gamma-curcumene synthase.